The primary structure comprises 388 residues: Beta-hexosaminidase LpqI (388 aa).

Residues 1 to 19 (MAFPRTLAILAAAAALVVA) form the signal peptide. Cysteine 20 carries the N-palmitoyl cysteine lipid modification. Cysteine 20 carries S-diacylglycerol cysteine lipidation. Residues aspartate 123, arginine 131, arginine 193, and 223–224 (KH) contribute to the substrate site. The active-site Proton donor/acceptor is histidine 236. The active-site Nucleophile is aspartate 311.

Belongs to the glycosyl hydrolase 3 family.

It is found in the cell inner membrane. It catalyses the reaction Hydrolysis of terminal non-reducing N-acetyl-D-hexosamine residues in N-acetyl-beta-D-hexosaminides.. It participates in cell wall biogenesis; peptidoglycan recycling. Plays a role in peptidoglycan recycling by cleaving the terminal beta-1,4-linked N-acetylglucosamine (GlcNAc) from peptidoglycan fragments. Acts as a regulator for GlcNAc-MurNAc levels by cleaving disaccharides and allowing the breakdown of MurNAc. The sequence is that of Beta-hexosaminidase LpqI from Mycobacterium tuberculosis (strain ATCC 25618 / H37Rv).